We begin with the raw amino-acid sequence, 457 residues long: 3-isopropylmalate dehydratase large subunit (457 aa).

3 residues coordinate [4Fe-4S] cluster: Cys337, Cys397, and Cys400.

Belongs to the aconitase/IPM isomerase family. LeuC type 1 subfamily. Heterodimer of LeuC and LeuD. It depends on [4Fe-4S] cluster as a cofactor.

It catalyses the reaction (2R,3S)-3-isopropylmalate = (2S)-2-isopropylmalate. It functions in the pathway amino-acid biosynthesis; L-leucine biosynthesis; L-leucine from 3-methyl-2-oxobutanoate: step 2/4. Its function is as follows. Catalyzes the isomerization between 2-isopropylmalate and 3-isopropylmalate, via the formation of 2-isopropylmaleate. The sequence is that of 3-isopropylmalate dehydratase large subunit from Oenococcus oeni (strain ATCC BAA-331 / PSU-1).